A 363-amino-acid polypeptide reads, in one-letter code: Teichoic acids export ATP-binding protein TagH (363 aa).

The ABC transporter domain maps to 27–246; it reads KHFFNIGNVD…YRKFSKDFKA (220 aa). ATP is bound at residue 60–67; that stretch reads GINGSGKS. Residues 247–363 are unknown; the sequence is QTAAYRKKYQ…KSQSVLFNSK (117 aa).

Belongs to the ABC transporter superfamily. Teichoic acids exporter (TC 3.A.1.104.1) family. In terms of assembly, the complex is composed of two ATP-binding proteins (TagH) and two transmembrane proteins (TagG).

It is found in the cell membrane. It carries out the reaction ATP + H2O + teichoic acidSide 1 = ADP + phosphate + teichoic acidSide 2.. In terms of biological role, part of the ABC transporter complex TagGH involved in teichoic acids export. Responsible for energy coupling to the transport system. The protein is Teichoic acids export ATP-binding protein TagH of Lactiplantibacillus plantarum (strain ATCC BAA-793 / NCIMB 8826 / WCFS1) (Lactobacillus plantarum).